A 109-amino-acid polypeptide reads, in one-letter code: Staphostatin B (109 aa).

The binds to staphopain B stretch occupies residues 97 to 101 (IGTSR).

It belongs to the protease inhibitor I57 (SspC) family. In terms of assembly, forms a stable non-covalent complex with prematurely activated/folded SspB.

Its subcellular location is the cytoplasm. In terms of biological role, specifically inhibits the cysteine protease staphopain B (SspB) by blocking the active site of the enzyme. Probably required to protect cytoplasmic proteins from being degraded by prematurely activated/folded prostaphopain B. Also involved in growth capacity, viability and bacterial morphology. The protein is Staphostatin B (sspC) of Staphylococcus aureus (strain Mu50 / ATCC 700699).